A 322-amino-acid polypeptide reads, in one-letter code: Quinolinate synthase (322 aa).

His37 and Ser54 together coordinate iminosuccinate. Cys99 lines the [4Fe-4S] cluster pocket. Iminosuccinate contacts are provided by residues 125 to 127 (YIN) and Ser142. Cys185 serves as a coordination point for [4Fe-4S] cluster. Residues 211–213 (HPE) and Thr228 each bind iminosuccinate. Cys278 lines the [4Fe-4S] cluster pocket.

This sequence belongs to the quinolinate synthase family. Type 2 subfamily. It depends on [4Fe-4S] cluster as a cofactor.

It is found in the cytoplasm. The catalysed reaction is iminosuccinate + dihydroxyacetone phosphate = quinolinate + phosphate + 2 H2O + H(+). It functions in the pathway cofactor biosynthesis; NAD(+) biosynthesis; quinolinate from iminoaspartate: step 1/1. In terms of biological role, catalyzes the condensation of iminoaspartate with dihydroxyacetone phosphate to form quinolinate. In Chlorobaculum parvum (strain DSM 263 / NCIMB 8327) (Chlorobium vibrioforme subsp. thiosulfatophilum), this protein is Quinolinate synthase.